A 152-amino-acid chain; its full sequence is Prefoldin subunit alpha (152 aa).

The disordered stretch occupies residues E110–E152. Positions T111–E124 are enriched in acidic residues. A compositionally biased stretch (low complexity) spans L125–E152.

Belongs to the prefoldin alpha subunit family. In terms of assembly, heterohexamer of two alpha and four beta subunits.

It is found in the cytoplasm. In terms of biological role, molecular chaperone capable of stabilizing a range of proteins. Seems to fulfill an ATP-independent, HSP70-like function in archaeal de novo protein folding. The protein is Prefoldin subunit alpha of Halorubrum lacusprofundi (strain ATCC 49239 / DSM 5036 / JCM 8891 / ACAM 34).